A 313-amino-acid chain; its full sequence is Acetaldehyde dehydrogenase (313 aa).

15–18 (SGNI) is an NAD(+) binding site. Catalysis depends on Cys133, which acts as the Acyl-thioester intermediate. Residues 164 to 172 (SAGPGTRAN) and Asn289 contribute to the NAD(+) site.

The protein belongs to the acetaldehyde dehydrogenase family.

It catalyses the reaction acetaldehyde + NAD(+) + CoA = acetyl-CoA + NADH + H(+). In Rhizobium rhizogenes (strain K84 / ATCC BAA-868) (Agrobacterium radiobacter), this protein is Acetaldehyde dehydrogenase.